A 912-amino-acid chain; its full sequence is Nitrate reductase [NADH] (912 aa).

The interval 1-99 (SVEPRQPFGR…PRDEGTADAW (99 aa)) is disordered. Residues 13-23 (APATAPTARAP) are compositionally biased toward low complexity. Over residues 54–68 (AEEDEEDDDEDDEGH) the composition is skewed to acidic residues. The span at 85–94 (PSTRDPRDEG) shows a compositional bias: basic and acidic residues. Position 186 (cysteine 186) interacts with Mo-molybdopterin. One can recognise a Cytochrome b5 heme-binding domain in the interval 535 to 610 (DKQFTMSEVR…LDTYRIGELI (76 aa)). Histidine 570 and histidine 593 together coordinate heme. The FAD-binding FR-type domain maps to 651 to 764 (REKVPCRLVD…KGPLGHVEYT (114 aa)). FAD-binding positions include 703–706 (RAYT), 720–724 (LVKVY), phenylalanine 725, phenylalanine 732, 737–739 (LMT), serine 788, and threonine 791.

The protein belongs to the nitrate reductase family. In terms of assembly, homodimer. FAD is required as a cofactor. It depends on heme as a cofactor. Requires Mo-molybdopterin as cofactor.

The enzyme catalyses nitrite + NAD(+) + H2O = nitrate + NADH + H(+). Nitrate reductase is a key enzyme involved in the first step of nitrate assimilation in plants, fungi and bacteria. This Hordeum vulgare (Barley) protein is Nitrate reductase [NADH].